The chain runs to 290 residues: Pirin (290 aa).

Residues His-56, His-58, His-101, and Glu-103 each contribute to the Fe cation site.

The protein belongs to the pirin family. In terms of assembly, may interact with NF1/CTF1. Interacts with BCL3. Identified in a complex comprised of PIR, BLC3, NFKB1 and target DNA. Fe cation serves as cofactor. In terms of tissue distribution, highly expressed in a subset of melanomas. Detected at very low levels in most tissues (at protein level). Expressed in all tissues, with highest level of expression in heart and liver.

Its subcellular location is the nucleus. The protein localises to the cytoplasm. It carries out the reaction quercetin + O2 = 2-(3,4-dihydroxybenzoyloxy)-4,6-dihydroxybenzoate + CO. It functions in the pathway flavonoid metabolism; quercetin degradation. Its activity is regulated as follows. Inhibited by kojic acid, sodium diethyldithiocarbamate and 1,10-phenanthroline monohydrochloride. Transcriptional coregulator of NF-kappa-B which facilitates binding of NF-kappa-B proteins to target kappa-B genes in a redox-state-dependent manner. May be required for efficient terminal myeloid maturation of hematopoietic cells. Has quercetin 2,3-dioxygenase activity (in vitro). The polypeptide is Pirin (PIR) (Homo sapiens (Human)).